Consider the following 265-residue polypeptide: Undecaprenyl-diphosphatase (265 aa).

8 helical membrane-spanning segments follow: residues 7–27 (VIVS…PISS), 45–65 (TKIL…YFFH), 86–106 (LHIL…YKKI), 108–128 (LLFN…FLLI), 145–165 (ISLL…YPGF), 186–206 (IEFS…YDFI), 214–234 (ILDL…SILC), and 245–265 (TSLI…YFIN).

Belongs to the UppP family.

It is found in the cell membrane. It carries out the reaction di-trans,octa-cis-undecaprenyl diphosphate + H2O = di-trans,octa-cis-undecaprenyl phosphate + phosphate + H(+). Catalyzes the dephosphorylation of undecaprenyl diphosphate (UPP). Confers resistance to bacitracin. The chain is Undecaprenyl-diphosphatase from Buchnera aphidicola subsp. Acyrthosiphon pisum (strain 5A).